Here is a 248-residue protein sequence, read N- to C-terminus: uncharacterized protein (248 aa).

8–32 (IVTGAAQGIGQAYAQALAREGASVV) contacts NADP(+). A substrate-binding site is contributed by S143. Y153 acts as the Proton acceptor in catalysis.

The protein belongs to the short-chain dehydrogenases/reductases (SDR) family.

This is an uncharacterized protein from Mycobacterium tuberculosis (strain CDC 1551 / Oshkosh).